Reading from the N-terminus, the 383-residue chain is Putative [LysW]-aminoadipate semialdehyde/glutamate semialdehyde transaminase (383 aa).

Pyridoxal 5'-phosphate is bound by residues 97 to 98 (GT) and Phe-124. Residue Arg-127 participates in substrate binding. Residue 209 to 212 (DEVQ) coordinates pyridoxal 5'-phosphate. Position 238 is an N6-(pyridoxal phosphate)lysine (Lys-238). Ser-266 is a binding site for substrate. Thr-267 lines the pyridoxal 5'-phosphate pocket.

This sequence belongs to the class-III pyridoxal-phosphate-dependent aminotransferase family. LysJ subfamily. In terms of assembly, homodimer. It depends on pyridoxal 5'-phosphate as a cofactor.

It localises to the cytoplasm. The catalysed reaction is [amino-group carrier protein]-C-terminal-gamma-(L-lysyl)-L-glutamate + 2-oxoglutarate = [amino-group carrier protein]-C-terminal-N-(1-carboxy-5-oxopentan-1-yl)-L-glutamine + L-glutamate. It carries out the reaction [amino-group carrier protein]-C-terminal-gamma-(L-ornithyl)-L-glutamate + 2-oxoglutarate = [amino-group carrier protein]-C-terminal-gamma-(L-glutamyl-5-semialdehyde)-L-glutamate + L-glutamate. It functions in the pathway amino-acid biosynthesis; L-lysine biosynthesis via AAA pathway; L-lysine from L-alpha-aminoadipate (Thermus route): step 4/5. It participates in amino-acid biosynthesis; L-arginine biosynthesis. Involved in both the arginine and lysine biosynthetic pathways. This is Putative [LysW]-aminoadipate semialdehyde/glutamate semialdehyde transaminase from Pyrobaculum aerophilum (strain ATCC 51768 / DSM 7523 / JCM 9630 / CIP 104966 / NBRC 100827 / IM2).